Here is a 386-residue protein sequence, read N- to C-terminus: MSVHVKEEPVLVPNCDVENTELAVFNGNGESELENFGTCVDEITDRVNQLEQKVVEVEHFYSTKDGAAQTNTSKSNSGGKKIAISQPNNSKGNSAGKEKSKGKHVSSPDLMRQFATMFRQIAQHKWAWPFLEPVDVKGLGLHDYYKVIEKPMDLGTIKKKMESSEYSNVREIYADVRLVFKNAMRYNEEKEDVYVMAESLLEKFEEKWLLIMPKLVEEEKKQVDEEAEKHANKQLTMEAAQAEMARDLSNELYEIDLQLEKLRESVVQRCRKLSTQEKKGLSAALGRLSPEDLSKALKMVSESNPSFPAGAPEVELDIDVQTDVTLWRLKVFVQEALKAANKSSGGTNAQNNNNTGTGEINKNNAKRRREISDAINKASIKRAKKA.

2 disordered regions span residues 66–106 and 340–386; these read GAAQ…KHVS and ANKS…AKKA. Residues 68 to 78 are compositionally biased toward polar residues; it reads AQTNTSKSNSG. Residues 105–211 enclose the Bromo domain; sequence VSSPDLMRQF…EKFEEKWLLI (107 aa). Residues 263–344 form the NET domain; it reads RESVVQRCRK…EALKAANKSS (82 aa). Low complexity predominate over residues 345–358; that stretch reads GGTNAQNNNNTGTG.

Barely detectable in stems, leaves, siliques, and dry seeds, but was present at considerable levels in roots, flowers and imbibited seeds.

It localises to the nucleus. Transcription activator that plays a role in the promotion of seed germination by both negatively and positively regulating the abscisic acid (ABA) and phytochrome A (phyA) transduction pathways, respectively. The sequence is that of Transcription factor GTE1 (GTE1) from Arabidopsis thaliana (Mouse-ear cress).